The sequence spans 265 residues: MLEISFIPAFKDNYIWLLTRGKRAFVVDPGDAAPVLARLEAGGLMLEGILITHHHADHQGGVAELKARWQAEVYAPGNESITGCSCPLSGGESIDVLGQKVTVMAVPGHTLGHLAYYAPGALLCGDTLFGAGCGRLFEGTPAQMSASLDSIAALPGDTLIYCAHEYTEMNLRFALAVEPNNQALQARVAKVAALRAAGLPSVPLILAEEKATNPFLRCHEAAVVEAGLQHAASCLLGHAAQQGADIEDRSKTAIFAAIRSWRNTF.

7 residues coordinate Zn(2+): His-53, His-55, Asp-57, His-58, His-109, Asp-126, and His-164.

The protein belongs to the metallo-beta-lactamase superfamily. Glyoxalase II family. As to quaternary structure, monomer. Zn(2+) is required as a cofactor.

The catalysed reaction is an S-(2-hydroxyacyl)glutathione + H2O = a 2-hydroxy carboxylate + glutathione + H(+). The protein operates within secondary metabolite metabolism; methylglyoxal degradation; (R)-lactate from methylglyoxal: step 2/2. In terms of biological role, thiolesterase that catalyzes the hydrolysis of S-D-lactoyl-glutathione to form glutathione and D-lactic acid. The sequence is that of Hydroxyacylglutathione hydrolase from Dechloromonas aromatica (strain RCB).